Consider the following 314-residue polypeptide: tRNA pseudouridine synthase B (314 aa).

Substrate is bound at residue His-43. Asp-48 acts as the Nucleophile in catalysis. Substrate contacts are provided by Tyr-76, Tyr-179, and Leu-200.

The protein belongs to the pseudouridine synthase TruB family. Type 1 subfamily.

The enzyme catalyses uridine(55) in tRNA = pseudouridine(55) in tRNA. Responsible for synthesis of pseudouridine from uracil-55 in the psi GC loop of transfer RNAs. The sequence is that of tRNA pseudouridine synthase B from Escherichia coli O139:H28 (strain E24377A / ETEC).